The sequence spans 254 residues: rRNA N-glycosylase sapovaccarin-S1 (254 aa).

It belongs to the ribosome-inactivating protein family. Type 1 RIP subfamily. As to expression, expressed in seeds; most abundant in the perisperm.

The catalysed reaction is Endohydrolysis of the N-glycosidic bond at one specific adenosine on the 28S rRNA.. Functionally, exhibits N-glycosylase activity. Catalyzes the release of one adenine from a ribosome. Acts as a ribosome-inactivating protein and inhibits protein synthesis in a rabbit-reticulocyte lysate system and in various cell lines (in vitro). Induces cell death in Huh-7 liver cells. May contribute to the protection against plant pests and predators or play a role in regulating the death of plant cells. The protein is rRNA N-glycosylase sapovaccarin-S1 of Gypsophila vaccaria (Cow soapwort).